A 204-amino-acid chain; its full sequence is Apoptosis regulator R11 (204 aa).

The BH1 motif lies at 101–120 (ELFRDGTNWGRIVAFFSFGR). The short motif at 152-167 (PWMQENGGWEAFVGLY) is the BH2 element. The chain crosses the membrane as a helical span at residues 181-198 (RFGRLLTIVMLTGVFALV).

The protein belongs to the Bcl-2 family.

It localises to the membrane. Confers strong protection against cell death. The chain is Apoptosis regulator R11 from Xenopus laevis (African clawed frog).